Reading from the N-terminus, the 392-residue chain is D-amino-acid oxidase 2 (392 aa).

Ser10, Ile13, Arg33, Asp34, Ala45, Ser46, Gly50, and Asn52 together coordinate FAD. Phe56, Tyr245, Tyr262, and Arg311 together coordinate anthranilate. Positions 245, 262, and 311 each coordinate (R)-lactate. Residues Arg311, Gly361, Ser362, Gly364, and Gln366 each coordinate FAD. Ser362 provides a ligand contact to anthranilate. Ser362 provides a ligand contact to (R)-lactate. The Microbody targeting signal signature appears at Ala390–Leu392.

It belongs to the DAMOX/DASOX family. It depends on FAD as a cofactor.

Its subcellular location is the peroxisome matrix. The enzyme catalyses a D-alpha-amino acid + O2 + H2O = a 2-oxocarboxylate + H2O2 + NH4(+). It catalyses the reaction D-methionine + O2 + H2O = 4-methylsulfanyl-2-oxobutanoate + H2O2 + NH4(+). It carries out the reaction D-serine + O2 + H2O = 3-hydroxypyruvate + H2O2 + NH4(+). The catalysed reaction is D-histidine + O2 + H2O = 3-(imidazol-5-yl)pyruvate + H2O2 + NH4(+). The enzyme catalyses D-proline + O2 = 1-pyrroline-2-carboxylate + H2O2. It catalyses the reaction D-alanine + O2 + H2O = pyruvate + H2O2 + NH4(+). It carries out the reaction D-leucine + O2 + H2O = 4-methyl-2-oxopentanoate + H2O2 + NH4(+). The catalysed reaction is D-valine + O2 + H2O = 3-methyl-2-oxobutanoate + H2O2 + NH4(+). Catalyzes the oxidative deamination of D-amino acids with broad substrate specificity. Enables the organism to utilize D-amino acids as a source of nutrients. Enables the organism to utilize D-alanine, D-cysteine, D-histidine, D-leucine, D-methionine, D-phenylalanine, D-proline, D-serine, D-threonine, D-aspartate and D-valine as a nitrogen source and may also contribute to utlization of D-tryptophan, D-tyrosine and D-asparagine as a nitrogen source. Protects the organism from the toxicity of D-amino acids, including from D-alanine. May play a role in its interaction with the host. The chain is D-amino-acid oxidase 2 from Cryptococcus deuterogattii (strain R265) (Cryptococcus gattii VGII (strain R265)).